We begin with the raw amino-acid sequence, 238 residues long: Ribosome-recycling factor, mitochondrial (238 aa).

It belongs to the RRF family.

It localises to the mitochondrion. Responsible for the release of ribosomes from messenger RNA at the termination of protein biosynthesis. May increase the efficiency of translation by recycling ribosomes from one round of translation to another. This Caenorhabditis elegans protein is Ribosome-recycling factor, mitochondrial.